Consider the following 42-residue polypeptide: Alpha-lactalbumin I (42 aa).

The C-type lysozyme domain occupies 1–42 (IDYRKCQASQILKEHGMDKVIPLPELVCTMFHISGLSPQAEV).

This sequence belongs to the glycosyl hydrolase 22 family. Lactose synthase (LS) is a heterodimer of a catalytic component, beta1,4-galactosyltransferase (beta4Gal-T1) and a regulatory component, alpha-lactalbumin (LA). Mammary gland specific. Secreted in milk.

The protein localises to the secreted. In terms of biological role, regulatory subunit of lactose synthase, changes the substrate specificity of galactosyltransferase in the mammary gland making glucose a good acceptor substrate for this enzyme. This enables LS to synthesize lactose, the major carbohydrate component of milk. In other tissues, galactosyltransferase transfers galactose onto the N-acetylglucosamine of the oligosaccharide chains in glycoproteins. The protein is Alpha-lactalbumin I (LALBA) of Macropus giganteus (Eastern gray kangaroo).